The chain runs to 150 residues: Cytochrome c-type biogenesis protein CcmE (150 aa).

Residues 1–7 (MTRKQKR) are Cytoplasmic-facing. The chain crosses the membrane as a helical; Signal-anchor for type II membrane protein span at residues 8-28 (LAIIGGGVAFLTAAVLLVMFA). Over 29-150 (FSQAVAYFYV…VTLGGEENIR (122 aa)) the chain is Periplasmic. Heme contacts are provided by histidine 123 and tyrosine 127.

It belongs to the CcmE/CycJ family.

It is found in the cell inner membrane. Its function is as follows. Heme chaperone required for the biogenesis of c-type cytochromes. Transiently binds heme delivered by CcmC and transfers the heme to apo-cytochromes in a process facilitated by CcmF and CcmH. The sequence is that of Cytochrome c-type biogenesis protein CcmE from Rhizobium meliloti (strain 1021) (Ensifer meliloti).